Reading from the N-terminus, the 372-residue chain is NAD(P)H-quinone oxidoreductase subunit 1 (372 aa).

Transmembrane regions (helical) follow at residues 27-47 (LIWLPLPMLLVLVAAVVGVLV), 97-117 (LLFTLGPVLVVVPVILSWLIV), 128-148 (VGVGIFLWISLSSVQPIGLLM), 166-186 (AAQSISYEIPLALAVLAVVMM), 204-224 (ILSWNIWRQPVGFLIFWICAL), 266-286 (VLSALLVSVLYLGGWGFPVPV), 308-328 (ATGIVMTVLKAYLLVFIAILL), and 347-367 (FLLPLALVNLLVTAALKLAFP).

Belongs to the complex I subunit 1 family. NDH-1 is composed of at least 11 different subunits.

It localises to the cellular thylakoid membrane. The enzyme catalyses a plastoquinone + NADH + (n+1) H(+)(in) = a plastoquinol + NAD(+) + n H(+)(out). The catalysed reaction is a plastoquinone + NADPH + (n+1) H(+)(in) = a plastoquinol + NADP(+) + n H(+)(out). Its function is as follows. NDH-1 shuttles electrons from an unknown electron donor, via FMN and iron-sulfur (Fe-S) centers, to quinones in the respiratory and/or the photosynthetic chain. The immediate electron acceptor for the enzyme in this species is believed to be plastoquinone. Couples the redox reaction to proton translocation, and thus conserves the redox energy in a proton gradient. This Synechococcus sp. (strain WH7803) protein is NAD(P)H-quinone oxidoreductase subunit 1.